An 895-amino-acid chain; its full sequence is Dystroglycan 1 (895 aa).

The first 29 residues, 1-29 (MRMSVGSAVPLPLWGRTFLLLLSVAVTQS), serve as a signal peptide directing secretion. The required for laminin recognition stretch occupies residues 30–408 (HWPSEPSEAV…SQIRPTMTIP (379 aa)). An O-glycosylated at one site region spans residues 49 to 71 (SMHSALSDLHETVPTVVGIPDGT). The N-linked (GlcNAc...) asparagine glycan is linked to Asn141. Cysteines 182 and 264 form a disulfide. The interval 316–485 (ATPTPVTAIG…PATRMRTTTS (170 aa)) is mucin-like domain. O-linked (Man6P...) threonine glycans are attached at residues Thr317, Thr319, and Thr379. Positions 381-500 (TLGPIQPTRV…GEPNQRPELK (120 aa)) are disordered. The segment covering 393–403 (AGTTVPSQIRP) has biased composition (polar residues). Residues 413–447 (PSTVTTPPTTTTKKPRVSTPRPATPSTDSSTTTTR) are compositionally biased toward low complexity. The O-glycosylated at seven sites with GalNAc stretch occupies residues 463–485 (TTKAPITRLETASPATRMRTTTS). In terms of domain architecture, Peptidase S72 spans 603–712 (KAPARFKAKL…MSITVTGSGS (110 aa)). Asn641, Asn649, and Asn661 each carry an N-linked (GlcNAc...) asparagine glycan. Over 654–749 (SIVVEWTNNT…DPEKSSEDDV (96 aa)) the chain is Extracellular. A disulfide bond links Cys669 and Cys713. The tract at residues 724–747 (PMRVPSEAPATEVPDRDPEKSSED) is disordered. Over residues 736–747 (VPDRDPEKSSED) the composition is skewed to basic and acidic residues. A helical membrane pass occupies residues 750 to 775 (YLHTVIPAVVVAAILLIAGIIAMICY). The Nuclear localization signal signature appears at 776–782 (RKKRKGK). The Cytoplasmic segment spans residues 776-895 (RKKRKGKLTL…YRSPPPYVPP (120 aa)). At Thr790 the chain carries Phosphothreonine. Residues 819 to 895 (LQEEKAPLPP…YRSPPPYVPP (77 aa)) form a required for interaction with CAV3 region. Positions 823 to 895 (KAPLPPPEYP…YRSPPPYVPP (73 aa)) are disordered. The span at 832–846 (PNQSMPETTPLNQDT) shows a compositional bias: polar residues. Residues 859–870 (SAPPYQPPPPFT) show a composition bias toward pro residues. The interval 880 to 895 (PKNMTPYRSPPPYVPP) is required for binding DMD and UTRN. The PPXY motif motif lies at 889 to 892 (PPPY). Tyr892 carries the post-translational modification Phosphotyrosine; by SRC.

Monomer. Heterodimer of alpha- and beta-dystroglycan subunits which are the central components of the dystrophin-glycoprotein complex. This complex then can form a dystrophin-associated glycoprotein complex (DGC) which is composed of three subcomplexes: a cytoplasmic complex comprised of DMD (or UTRN), DTNA and a number of syntrophins, such as SNTB1, SNTB2, SNTG1 and SNTG2, the transmembrane dystroglycan complex, and the sarcoglycan-sarcospan complex. Interacts (via the N-terminal of alphaDAG1) with LARGE1; the interaction enhances laminin binding. Interacts with SGCD. Interacts with AGR2 and AGR3. Interacts (betaDAG1) with DMD; the interaction is inhibited by phosphorylation on the PPXY motif. Interacts (betaDAG1, via its PPXY motif) with UTRN (via its WWW and ZZ domains); the interaction is inhibited by phosphorylation on the PPXY motif. Interacts (betaDAG1, via its phosphorylated PPXY motif) with the SH2 domain-containing proteins, FYN, CSK, NCK and SHC. Interacts (betaDAG1) with CAV3 (via a central WW-like domain); the interaction disrupts the binding of DMD. BetaDAG1 directly interacts with ANK3, but not with ANK2; this interaction does not interfere with DMD-binding and is required for retention at costameres. Identified in a dystroglycan complex that contains at least PRX, DRP2, UTRN, DMD and DAG1. Interacts with POMGNT1. BetaDAG1 interacts with CD93. O-glycosylated. POMGNT1 catalyzes the initial addition of N-acetylglucosamine, giving rise to the GlcNAc(beta1-2)Man(alpha1-)O-Ser/Thr moiety and thus providing the necessary basis for the addition of further carbohydrate moieties. Heavily O-glycosylated comprising of up to two thirds of its mass and the carbohydrate composition differs depending on tissue type. Mucin-type O-glycosylation is important for ligand binding activity. O-mannosylation is found in high abundance in both brain and muscle where the most abundant glycan is Sia-alpha-2-3-Gal-beta-1-4-Glc-NAc-beta-1-2-Man. In muscle, glycosylation on Thr-317, Thr-319 and Thr-379 by a phosphorylated O-mannosyl glycan with the structure 2-(N-acetylamido)-2-deoxygalactosyl-beta-1,3-2-(N-acetylamido)-2-deoxyglucosyl-beta-1,4-6-phosphomannose is mediated by like-acetylglucosaminyltransferase (LARGE1) protein amd is required for laminin binding. O-glycosylated in the N-terminal region with a core 1 or possibly core 8 glycan. The brain form displays a unique glycosylation pattern which is absent in other tissues; this form shows enhanced binding to laminin LAMA5 compared to the skeletal muscle form. In terms of processing, N-glycosylated. Post-translationally, autolytic cleavage produces the alpha and beta subunits. In cutaneous cells, as well as in certain pathological conditions, shedding of beta-dystroglycan can occur releasing a peptide of about 30 kDa. SRC-mediated phosphorylation of the PPXY motif of the beta subunit recruits SH2 domain-containing proteins, but inhibits binding to WWW domain-containing proteins, DMD and UTRN. This phosphorylation also inhibits nuclear entry. Expressed in brain (at protein level). Expressed in the myelin sheath of peripheral nerves.

The protein localises to the secreted. It is found in the extracellular space. It localises to the cell membrane. Its subcellular location is the cytoplasm. The protein resides in the cytoskeleton. The protein localises to the nucleus. It is found in the nucleoplasm. It localises to the sarcolemma. Its subcellular location is the postsynaptic cell membrane. In terms of biological role, the dystroglycan complex is involved in a number of processes including laminin and basement membrane assembly, sarcolemmal stability, cell survival, peripheral nerve myelination, nodal structure, cell migration, and epithelial polarization. Its function is as follows. Extracellular peripheral glycoprotein that acts as a receptor for extracellular matrix proteins containing laminin-G domains. Receptor for laminin-2 (LAMA2) and agrin in peripheral nerve Schwann cells. Also acts as a receptor for laminin LAMA5. Functionally, transmembrane protein that plays important roles in connecting the extracellular matrix to the cytoskeleton. Acts as a cell adhesion receptor in both muscle and non-muscle tissues. Receptor for both DMD and UTRN and, through these interactions, scaffolds axin to the cytoskeleton. Also functions in cell adhesion-mediated signaling and implicated in cell polarity. The protein is Dystroglycan 1 of Bos taurus (Bovine).